Consider the following 529-residue polypeptide: Bifunctional purine biosynthesis protein PurH (529 aa).

Residues 1–148 enclose the MGS-like domain; sequence MQQRRPVRRA…KNHKDVAIVV (148 aa). An N6-acetyllysine modification is found at Lys287.

Belongs to the PurH family.

It catalyses the reaction (6R)-10-formyltetrahydrofolate + 5-amino-1-(5-phospho-beta-D-ribosyl)imidazole-4-carboxamide = 5-formamido-1-(5-phospho-D-ribosyl)imidazole-4-carboxamide + (6S)-5,6,7,8-tetrahydrofolate. The catalysed reaction is IMP + H2O = 5-formamido-1-(5-phospho-D-ribosyl)imidazole-4-carboxamide. Its pathway is purine metabolism; IMP biosynthesis via de novo pathway; 5-formamido-1-(5-phospho-D-ribosyl)imidazole-4-carboxamide from 5-amino-1-(5-phospho-D-ribosyl)imidazole-4-carboxamide (10-formyl THF route): step 1/1. It participates in purine metabolism; IMP biosynthesis via de novo pathway; IMP from 5-formamido-1-(5-phospho-D-ribosyl)imidazole-4-carboxamide: step 1/1. This Escherichia coli (strain SMS-3-5 / SECEC) protein is Bifunctional purine biosynthesis protein PurH.